The following is a 263-amino-acid chain: uncharacterized protein (263 aa).

The protein belongs to the AtsA family.

The protein resides in the plastid. Its subcellular location is the chloroplast. This is an uncharacterized protein from Porphyra purpurea (Red seaweed).